The primary structure comprises 166 residues: Cofilin-2 (166 aa).

Residues 4 to 153 (GVTVNDEVIK…KDRSTLGEKL (150 aa)) form the ADF-H domain. Ser24 bears the Phosphoserine mark. A Nuclear localization signal motif is present at residues 30 to 34 (KKRKK).

Belongs to the actin-binding proteins ADF family. The phosphorylation of Ser-24 may prevent recognition of the nuclear localization signal. Widely distributed in various tissues.

The protein localises to the nucleus matrix. It is found in the cytoplasm. Its subcellular location is the cytoskeleton. Its function is as follows. Controls reversibly actin polymerization and depolymerization in a pH-sensitive manner. It has the ability to bind G- and F-actin in a 1:1 ratio of cofilin to actin. It is the major component of intranuclear and cytoplasmic actin rods. The chain is Cofilin-2 (CFL2) from Gallus gallus (Chicken).